The chain runs to 581 residues: Arginine--tRNA ligase (581 aa).

Residues 126 to 136 (PNLAKEMHVGH) carry the 'HIGH' region motif.

The protein belongs to the class-I aminoacyl-tRNA synthetase family. As to quaternary structure, monomer.

It is found in the cytoplasm. It carries out the reaction tRNA(Arg) + L-arginine + ATP = L-arginyl-tRNA(Arg) + AMP + diphosphate. This chain is Arginine--tRNA ligase, found in Shewanella pealeana (strain ATCC 700345 / ANG-SQ1).